The chain runs to 95 residues: Protein RnfH (95 aa).

It belongs to the UPF0125 (RnfH) family.

The polypeptide is Protein RnfH (Methylococcus capsulatus (strain ATCC 33009 / NCIMB 11132 / Bath)).